The chain runs to 399 residues: Sphingosine-1-phosphate phosphatase 2 (399 aa).

The next 4 membrane-spanning stretches (helical) occupy residues 88-108 (YLFQFSAALGQEVFYITFLPF), 121-141 (LIIIWVLVMYIGQVAKDVLKW), 160-180 (YGMPSTHAMAATAIAFTLLIS), and 185-205 (YQYPFVLGLVMAVVFSTLVCL). Residues 136–144 (KDVLKWPRP) form a phosphatase sequence motif I region. The segment at 163 to 166 (PSTH) is phosphatase sequence motif II. His-166 acts as the Proton donor in catalysis. Positions 206–217 (SRLYTGMHTVLD) are phosphatase sequence motif III. The active-site Nucleophile is the His-213. 5 helical membrane passes run 219–239 (LGGVLITALLIVLTYPAWTFI), 247–267 (PLFPVCVIVVPFFLCYNYPVS), 280–300 (ILAAGAGVTIGFWINHFFQLV), 318–338 (TYMLVLGLTKFAVGIVLILLV), and 371–391 (VPYKFVTYTSVGICATTFVPM).

The protein belongs to the type 2 lipid phosphate phosphatase family. In terms of tissue distribution, expressed strongly in kidney and heart, followed by brain, colon, small intestine and lung. Not detected in skeletal muscle, thymus, spleen, liver, placenta, and peripheral blood leukocytes.

Its subcellular location is the endoplasmic reticulum membrane. The enzyme catalyses sphinganine 1-phosphate + H2O = sphinganine + phosphate. It carries out the reaction sphing-4-enine 1-phosphate + H2O = sphing-4-enine + phosphate. It catalyses the reaction (4R)-hydroxysphinganine 1-phosphate + H2O = (4R)-hydroxysphinganine + phosphate. Has specific phosphohydrolase activity towards sphingoid base 1-phosphates. Has high phosphohydrolase activity against dihydrosphingosine-1-phosphate and sphingosine-1-phosphate (S1P) in vitro. Sphingosine-1-phosphate phosphatase activity is needed for efficient recycling of sphingosine into the sphingolipid synthesis pathway. May play a role in attenuating intracellular sphingosine 1-phosphate (S1P) signaling. May play a role in pro-inflammatory signaling. Plays a role in the regulation of pancreatic islet beta-cell endoplasmic reticulum stress and proliferation. This is Sphingosine-1-phosphate phosphatase 2 from Homo sapiens (Human).